A 1077-amino-acid polypeptide reads, in one-letter code: Error-prone DNA polymerase (1077 aa).

The protein belongs to the DNA polymerase type-C family. DnaE2 subfamily.

Its subcellular location is the cytoplasm. The enzyme catalyses DNA(n) + a 2'-deoxyribonucleoside 5'-triphosphate = DNA(n+1) + diphosphate. Functionally, DNA polymerase involved in damage-induced mutagenesis and translesion synthesis (TLS). It is not the major replicative DNA polymerase. This chain is Error-prone DNA polymerase, found in Brucella melitensis biotype 1 (strain ATCC 23456 / CCUG 17765 / NCTC 10094 / 16M).